A 269-amino-acid chain; its full sequence is MERLVIRMPFCHLSTYSLVWVMAAVVLCTAQVQVVTQDEREQLYTPASLKCSLQNAQEALIVTWQKKKAVSPENMVTFSENHGVVIQPAYKDKINIAQLGLQNSTITFWNITLEDEGCYMCLFNTFGFGKISGTACLTVYVQPIVSLHYKFSEDHLNTTCSATARPAPMVFWKVPRSGIENSTVTLSHPNGTTSVTSILHIKDPKNQVGKEAICQVLHLGTVTDFKQTVNKGYWFSVPLLLSIVSLVTLLVLISILLYWKRHRNQDREP.

The signal sequence occupies residues 1-30 (MERLVIRMPFCHLSTYSLVWVMAAVVLCTA). Residues 31-141 (QVQVVTQDER…SGTACLTVYV (111 aa)) enclose the Ig-like V-type domain. Over 31 to 236 (QVQVVTQDER…QTVNKGYWFS (206 aa)) the chain is Extracellular. 2 disulfides stabilise this stretch: Cys51–Cys121 and Cys118–Cys136. Asn103 and Asn110 each carry an N-linked (GlcNAc...) asparagine glycan. In terms of domain architecture, Ig-like C2-type spans 142–232 (QPIVSLHYKF…TDFKQTVNKG (91 aa)). 3 N-linked (GlcNAc...) asparagine glycosylation sites follow: Asn157, Asn181, and Asn190. A disulfide bridge connects residues Cys160 and Cys214. A helical transmembrane segment spans residues 237–257 (VPLLLSIVSLVTLLVLISILL). Over 258–269 (YWKRHRNQDREP) the chain is Cytoplasmic.

In terms of assembly, CD200 and CD200R1 interact via their respective N-terminal Ig-like domains.

It is found in the cell membrane. In terms of biological role, costimulates T-cell proliferation. May regulate myeloid cell activity in a variety of tissues. The protein is OX-2 membrane glycoprotein (CD200) of Pongo abelii (Sumatran orangutan).